Reading from the N-terminus, the 201-residue chain is Recombination protein RecR (201 aa).

A C4-type zinc finger spans residues C57–C72. The 96-residue stretch at T81–P176 folds into the Toprim domain.

This sequence belongs to the RecR family.

Functionally, may play a role in DNA repair. It seems to be involved in an RecBC-independent recombinational process of DNA repair. It may act with RecF and RecO. The protein is Recombination protein RecR of Colwellia psychrerythraea (strain 34H / ATCC BAA-681) (Vibrio psychroerythus).